Here is a 141-residue protein sequence, read N- to C-terminus: Large ribosomal subunit protein uL11 (141 aa).

It belongs to the universal ribosomal protein uL11 family. In terms of assembly, part of the ribosomal stalk of the 50S ribosomal subunit. Interacts with L10 and the large rRNA to form the base of the stalk. L10 forms an elongated spine to which L12 dimers bind in a sequential fashion forming a multimeric L10(L12)X complex. In terms of processing, one or more lysine residues are methylated.

Functionally, forms part of the ribosomal stalk which helps the ribosome interact with GTP-bound translation factors. This is Large ribosomal subunit protein uL11 from Lactococcus lactis subsp. lactis (strain IL1403) (Streptococcus lactis).